A 351-amino-acid chain; its full sequence is MENNILELRNVTKEYDGQVVLKGISFNVKEGEFITLLGPSGCGKTTILKIIGGSQKPNSGEILFEDKNLIPIPINKRQFNTIFQSYALFPHLNVFDNVAFGLTIKKTKKDIIEREVMRQIRQVGLEGYENKKIDELSGGQKQRVAIARALVMKPKVLLLDEPMAALDVKLRKTMQEELKRLQQDIGITFIMVSHDQEEALSMSDRIVVMNQGTIQQIGTPEEIYNEPENAWVANFIGSSNIITDGIFLEDNKIKFDGKVFECIDTNFGENESSIDIIIRPEDIIIKNPNNGFFNAKVIKTTFKGIHWEVVVETSKKRQWIIHTINEYDIDQQVSIKWKPANVHVMWKEVDN.

Residues 6–236 (LELRNVTKEY…PENAWVANFI (231 aa)) enclose the ABC transporter domain. 38–45 (GPSGCGKT) contributes to the ATP binding site.

Belongs to the ABC transporter superfamily. Spermidine/putrescine importer (TC 3.A.1.11.1) family. The complex is composed of two ATP-binding proteins (PotA), two transmembrane proteins (PotB and PotC) and a solute-binding protein (PotD).

It localises to the cell membrane. It carries out the reaction ATP + H2O + polyamine-[polyamine-binding protein]Side 1 = ADP + phosphate + polyamineSide 2 + [polyamine-binding protein]Side 1.. Its function is as follows. Part of the ABC transporter complex PotABCD involved in spermidine/putrescine import. Responsible for energy coupling to the transport system. This Mycoplasma capricolum subsp. capricolum (strain California kid / ATCC 27343 / NCTC 10154) protein is Spermidine/putrescine import ATP-binding protein PotA.